A 367-amino-acid polypeptide reads, in one-letter code: Histidinol-phosphate aminotransferase (367 aa).

Lysine 222 is subject to N6-(pyridoxal phosphate)lysine.

The protein belongs to the class-II pyridoxal-phosphate-dependent aminotransferase family. Histidinol-phosphate aminotransferase subfamily. Pyridoxal 5'-phosphate serves as cofactor.

The enzyme catalyses L-histidinol phosphate + 2-oxoglutarate = 3-(imidazol-4-yl)-2-oxopropyl phosphate + L-glutamate. It participates in amino-acid biosynthesis; L-histidine biosynthesis; L-histidine from 5-phospho-alpha-D-ribose 1-diphosphate: step 7/9. This Methanosphaera stadtmanae (strain ATCC 43021 / DSM 3091 / JCM 11832 / MCB-3) protein is Histidinol-phosphate aminotransferase.